Reading from the N-terminus, the 255-residue chain is Ribosomal RNA small subunit methyltransferase G (255 aa).

S-adenosyl-L-methionine contacts are provided by residues Gly-89, Phe-94, 112–114 (DST), 140–141 (VE), and Arg-159.

Belongs to the methyltransferase superfamily. RNA methyltransferase RsmG family.

Its subcellular location is the cytoplasm. Specifically methylates the N7 position of a guanine in 16S rRNA. The polypeptide is Ribosomal RNA small subunit methyltransferase G (Trichodesmium erythraeum (strain IMS101)).